A 365-amino-acid chain; its full sequence is tRNA N6-adenosine threonylcarbamoyltransferase (365 aa).

His119 and His123 together coordinate Fe cation. Substrate contacts are provided by residues 141–145 (LVSGG), Asp174, and Gly187. Residues 184-203 (QPGGPSVEGEARQGDPKRFR) are disordered. Residues 192–201 (GEARQGDPKR) are compositionally biased toward basic and acidic residues. Residue Asn289 coordinates substrate. Asp317 provides a ligand contact to Fe cation. The tract at residues 342–365 (ARPRWPLDQSSPAMLGSGKKGAKA) is disordered.

This sequence belongs to the KAE1 / TsaD family. It depends on Fe(2+) as a cofactor.

The protein localises to the cytoplasm. The catalysed reaction is L-threonylcarbamoyladenylate + adenosine(37) in tRNA = N(6)-L-threonylcarbamoyladenosine(37) in tRNA + AMP + H(+). Its function is as follows. Required for the formation of a threonylcarbamoyl group on adenosine at position 37 (t(6)A37) in tRNAs that read codons beginning with adenine. Is involved in the transfer of the threonylcarbamoyl moiety of threonylcarbamoyl-AMP (TC-AMP) to the N6 group of A37, together with TsaE and TsaB. TsaD likely plays a direct catalytic role in this reaction. In Ruegeria pomeroyi (strain ATCC 700808 / DSM 15171 / DSS-3) (Silicibacter pomeroyi), this protein is tRNA N6-adenosine threonylcarbamoyltransferase.